Reading from the N-terminus, the 186-residue chain is MVRYAATEIAPAKSARSRGSYLRVSFKNTRETAQAINGWKLQRAQKFLENVLEKKEAVPMRRYAGGTGRAAQGKQFGVSRARWPAKSAEFLLGLLKNAEANADAKGLDTGNLVVKHIQVNQAPKQRRRTYRAHGRINPYMSNPCHIELILTEADEVVQKSEAVVREEAHLSSRQRGARVRRAITAA.

The protein belongs to the universal ribosomal protein uL22 family. Component of the large ribosomal subunit (LSU). Mature N.crassa ribosomes consist of a small (40S) and a large (60S) subunit. The 40S small subunit contains 1 molecule of ribosomal RNA (18S rRNA) and at least 32 different proteins. The large 60S subunit contains 3 rRNA molecules (26S, 5.8S and 5S rRNA) and at least 42 different proteins.

The protein resides in the cytoplasm. In terms of biological role, component of the ribosome, a large ribonucleoprotein complex responsible for the synthesis of proteins in the cell. The small ribosomal subunit (SSU) binds messenger RNAs (mRNAs) and translates the encoded message by selecting cognate aminoacyl-transfer RNA (tRNA) molecules. The large subunit (LSU) contains the ribosomal catalytic site termed the peptidyl transferase center (PTC), which catalyzes the formation of peptide bonds, thereby polymerizing the amino acids delivered by tRNAs into a polypeptide chain. The nascent polypeptides leave the ribosome through a tunnel in the LSU and interact with protein factors that function in enzymatic processing, targeting, and the membrane insertion of nascent chains at the exit of the ribosomal tunnel. This is Large ribosomal subunit protein uL22 (rpl-17) from Neurospora crassa (strain ATCC 24698 / 74-OR23-1A / CBS 708.71 / DSM 1257 / FGSC 987).